Here is a 98-residue protein sequence, read N- to C-terminus: Cytochrome c-552 (98 aa).

A signal peptide spans 1–18 (MKKFLLVAVVGLAGITFA). Residues cysteine 28, cysteine 31, histidine 32, and methionine 77 each coordinate heme c.

Belongs to the cytochrome c family. Binds 1 heme c group covalently per subunit.

Its function is as follows. Reacts with hydrogenase. The sequence is that of Cytochrome c-552 from Hydrogenobacter thermophilus (strain DSM 6534 / IAM 12695 / TK-6).